We begin with the raw amino-acid sequence, 198 residues long: MTAQNENAQAQAEQVEVANEAQLEQTAEIQQEQPVEAELAAAYARINELETYVAEADNREKDIQLRAQAEIQNIRRRAEQDVEKAHKFALEKFSKELLTVVDNLERGLNALDTAVTDEKTQALVDGVEMTHKEFISTLAKFGVEAVGVVGEAFNPEVHEAISMQPAEGIEANHISVVLQKGYTLQGRVLRPAMVMVAG.

It belongs to the GrpE family. Homodimer.

The protein resides in the cytoplasm. Participates actively in the response to hyperosmotic and heat shock by preventing the aggregation of stress-denatured proteins, in association with DnaK and GrpE. It is the nucleotide exchange factor for DnaK and may function as a thermosensor. Unfolded proteins bind initially to DnaJ; upon interaction with the DnaJ-bound protein, DnaK hydrolyzes its bound ATP, resulting in the formation of a stable complex. GrpE releases ADP from DnaK; ATP binding to DnaK triggers the release of the substrate protein, thus completing the reaction cycle. Several rounds of ATP-dependent interactions between DnaJ, DnaK and GrpE are required for fully efficient folding. This is Protein GrpE from Actinobacillus pleuropneumoniae serotype 5b (strain L20).